A 106-amino-acid polypeptide reads, in one-letter code: 3-phenylpropionate/cinnamic acid dioxygenase ferredoxin subunit (106 aa).

The Rieske domain maps to 4–99; sequence IYACPVADVP…VHVEGGDIFI (96 aa). [2Fe-2S] cluster contacts are provided by C42, H44, C62, and H65.

It belongs to the bacterial ring-hydroxylating dioxygenase ferredoxin component family. This dioxygenase system consists of four proteins: the two subunits of the hydroxylase component (HcaE and HcaF), a ferredoxin (HcaC) and a ferredoxin reductase (HcaD). It depends on [2Fe-2S] cluster as a cofactor.

It participates in aromatic compound metabolism; 3-phenylpropanoate degradation. Functionally, part of the multicomponent 3-phenylpropionate dioxygenase, that converts 3-phenylpropionic acid (PP) and cinnamic acid (CI) into 3-phenylpropionate-dihydrodiol (PP-dihydrodiol) and cinnamic acid-dihydrodiol (CI-dihydrodiol), respectively. This protein seems to be a 2Fe-2S ferredoxin. This chain is 3-phenylpropionate/cinnamic acid dioxygenase ferredoxin subunit, found in Shigella flexneri serotype 5b (strain 8401).